Consider the following 570-residue polypeptide: Adenine deaminase (570 aa).

Belongs to the metallo-dependent hydrolases superfamily. Adenine deaminase family. Mn(2+) serves as cofactor.

It carries out the reaction adenine + H2O + H(+) = hypoxanthine + NH4(+). The chain is Adenine deaminase from Clostridium acetobutylicum (strain ATCC 824 / DSM 792 / JCM 1419 / IAM 19013 / LMG 5710 / NBRC 13948 / NRRL B-527 / VKM B-1787 / 2291 / W).